The sequence spans 258 residues: Glucose 1-dehydrogenase 2 (258 aa).

11–35 (IVTGSSKGIGKAIAERFGKEKMNVV) contributes to the NADP(+) binding site. Position 146 (serine 146) interacts with substrate. The active-site Proton acceptor is the tyrosine 159.

It belongs to the short-chain dehydrogenases/reductases (SDR) family. In terms of assembly, homotetramer.

It carries out the reaction D-glucose + NAD(+) = D-glucono-1,5-lactone + NADH + H(+). It catalyses the reaction D-glucose + NADP(+) = D-glucono-1,5-lactone + NADPH + H(+). The protein is Glucose 1-dehydrogenase 2 (ycdF) of Bacillus subtilis (strain 168).